A 559-amino-acid chain; its full sequence is MADGDYFAEAARAVGCPHAPVPGLGLGPPLGWKERLKAGLANSGSTLWFLAGLGLLYALRVPLRLCDNVTAVTGFLSSLTPKFYVALTGTSSLISGLIFIFEWWYFHKHGTSFIEQVSISHLRPLMGGTESSISEPGSPANSRESETLRHHHLSECKVWRNPLNLFRGAEYRRYTWVTGKEPLTYYDMNLSAQDHQTFFTCETDFLRPSDTVMQKAWRERNPPARIKAAYQALELNNDCATAYVLLAEEEATTIVDAERLFKQALRAGEIIYRRSQQCQHQSPQHEAQLRRDTNVLVYIKRRLAMCARKLGRIREAVKIMRDLMKEFPPLTMLNIHENLLESLLELQAYADVQAVLAKYDDISLPKSAAICYTAALLKTRTVSDKFSPETAFRKGLSTAEINAVEAIHRAVEFNPHVPKYLLEMKSLILPPEHILKRGDSEAIAYAFFHLQHWKRIEGALNLLQCTWEGTFRMIPYPLEKGHLFYPYPSCTETADRELLPTFHHVSVYPKKELPFFIHFTAGLCSSTAMIALLTHQFPEVMGVFAKAVSMISRTCVEYL.

A run of 3 helical transmembrane segments spans residues 39 to 59 (GLAN…LYAL), 83 to 103 (FYVA…IFEW), and 513 to 533 (LPFF…IALL).

The protein belongs to the ST7 family.

Its subcellular location is the membrane. The sequence is that of Suppressor of tumorigenicity 7 protein-like (St7l) from Rattus norvegicus (Rat).